The following is a 477-amino-acid chain: 3-isopropylmalate dehydratase large subunit (477 aa).

C347, C407, and C410 together coordinate [4Fe-4S] cluster. Positions 418–442 (LAPGERSASTSNRNFEGRQGKGGRT) are disordered.

The protein belongs to the aconitase/IPM isomerase family. LeuC type 1 subfamily. As to quaternary structure, heterodimer of LeuC and LeuD. [4Fe-4S] cluster is required as a cofactor.

It carries out the reaction (2R,3S)-3-isopropylmalate = (2S)-2-isopropylmalate. It participates in amino-acid biosynthesis; L-leucine biosynthesis; L-leucine from 3-methyl-2-oxobutanoate: step 2/4. Catalyzes the isomerization between 2-isopropylmalate and 3-isopropylmalate, via the formation of 2-isopropylmaleate. This is 3-isopropylmalate dehydratase large subunit from Streptomyces avermitilis (strain ATCC 31267 / DSM 46492 / JCM 5070 / NBRC 14893 / NCIMB 12804 / NRRL 8165 / MA-4680).